A 260-amino-acid polypeptide reads, in one-letter code: Uroplakin-1b (260 aa).

The Cytoplasmic portion of the chain corresponds to 1 to 15 (MAKDDSTVRCFQGLL). Residues 16–36 (IFGHVIVGMCGIALTAECIFF) form a helical membrane-spanning segment. Over 37–59 (VSDQHSLYPLLEATNNDDIFGAA) the chain is Extracellular. The chain crosses the membrane as a helical span at residues 60-80 (WIGMFVGICLFCLSVLAIVGI). Topologically, residues 81-86 (MKSNRK) are cytoplasmic. Residues 87–107 (ILLAYFIMMFIVYGFEVASCI) traverse the membrane as a helical segment. Residues 108-229 (TAATQRDFFT…ELISGPMDRH (122 aa)) lie on the Extracellular side of the membrane. The chain crosses the membrane as a helical span at residues 230-250 (AWGVAWFGFAILCWTFWVLLG). Residues 251–260 (TMFYWSRIEY) lie on the Cytoplasmic side of the membrane.

The protein belongs to the tetraspanin (TM4SF) family. As to quaternary structure, heterodimer with uroplakin-3A (UPK3A) or uroplakin-3B (UPK3B). N-glycosylated with high-mannose oligosaccharides.

It is found in the membrane. In terms of biological role, component of the asymmetric unit membrane (AUM); a highly specialized biomembrane elaborated by terminally differentiated urothelial cells. May play an important role in normal bladder epithelial physiology, possibly in regulating membrane permeability of superficial umbrella cells or in stabilizing the apical membrane through AUM/cytoskeletal interactions. This chain is Uroplakin-1b (Upk1b), found in Rattus norvegicus (Rat).